Here is a 526-residue protein sequence, read N- to C-terminus: Delayed-rectifier potassium channel regulatory subunit KCNS1 (526 aa).

The Cytoplasmic portion of the chain corresponds to 1–217; it reads MLMLLVRGTH…LTMENPGYSL (217 aa). Residues 218-239 form a helical membrane-spanning segment; the sequence is PSKLFSCVSISVVLASIAAMCI. The Extracellular portion of the chain corresponds to 240–270; it reads HSLPEYQAREAAAAVAAVAAGRSPEGVRDDP. A helical membrane pass occupies residues 271–293; it reads VLRRLEYFCIAWFSFEVSSRLLL. At 294 to 304 the chain is on the cytoplasmic side; it reads APSTRNFFCHP. Residues 305-322 traverse the membrane as a helical segment; sequence LNLIDIVSVLPFYLTLLA. Residues 323–337 lie on the Extracellular side of the membrane; it reads GVALGDQGGKEFGHL. The helical; Voltage-sensor transmembrane segment at 338 to 358 threads the bilayer; sequence GKVVQVFRLMRIFRVLKLARH. Residues 359–373 lie on the Cytoplasmic side of the membrane; it reads STGLRSLGATLKHSY. The helical transmembrane segment at 374-395 threads the bilayer; sequence REVGILLLYLAVGVSVFSGVAY. The Extracellular portion of the chain corresponds to 396–408; that stretch reads TAEKEEDVGFNTI. The helical intramembrane region spans 409–420; that stretch reads PACWWWGTVSMT. Residues 421–426 carry the Selectivity filter motif; sequence TVGYGD. An intramembrane segment occupies 421 to 428; sequence TVGYGDVV. At 429–435 the chain is on the extracellular side; it reads PVTVAGK. A helical transmembrane segment spans residues 436–464; the sequence is LAASGCILGGILVVALPITIIFNKFSHFY. At 465-526 the chain is on the cytoplasmic side; the sequence is RRQKALEAAV…PSEPPHPQRY (62 aa). Residues 492 to 526 are disordered; it reads VSEASLETSGETSQEGRSADLESQAPSEPPHPQRY. Over residues 496–507 the composition is skewed to polar residues; it reads SLETSGETSQEG.

This sequence belongs to the potassium channel family. S (TC 1.A.1.2) subfamily. Kv9.1/KCNS1 sub-subfamily. As to quaternary structure, heterotetramer with KCNB1. Heterotetramer with KCNB2. Does not form homomultimers.

Its subcellular location is the cell membrane. In terms of biological role, potassium channel regulatory subunit that modulate the delayed rectifier voltage-gated potassium channel activity of KCNB1 and KCNB2 by altering their kinetics, expression levels, and shifting the half-inactivation potential to more polarized values. While it does not form functional channels on its own, it can form functional heterotetrameric channels with KCNB1 and KCNB2. Each regulatory subunit has unique regulatory properties that can lead to extensive inhibition, significant changes in kinetics, and/or substantial shifts in the voltage dependencies of the inactivation process. The polypeptide is Delayed-rectifier potassium channel regulatory subunit KCNS1 (Gorilla gorilla gorilla (Western lowland gorilla)).